Reading from the N-terminus, the 490-residue chain is Betaine aldehyde dehydrogenase (490 aa).

Residues Thr-26, Ile-27, and Asp-93 each contribute to the K(+) site. Residue 150–152 coordinates NAD(+); the sequence is GAW. Catalysis depends on Lys-162, which acts as the Charge relay system. 176–179 is a binding site for NAD(+); sequence KPSE. A K(+)-binding site is contributed by Val-180. 230–233 lines the NAD(+) pocket; the sequence is GVAS. Leu-246 serves as a coordination point for K(+). Glu-252 (proton acceptor) is an active-site residue. Residues Gly-254, Cys-286, and Glu-387 each contribute to the NAD(+) site. The Nucleophile role is filled by Cys-286. The residue at position 286 (Cys-286) is a Cysteine sulfenic acid (-SOH). Residues Lys-457 and Gly-460 each coordinate K(+). Glu-464 functions as the Charge relay system in the catalytic mechanism.

The protein belongs to the aldehyde dehydrogenase family. Dimer of dimers. K(+) serves as cofactor.

The catalysed reaction is betaine aldehyde + NAD(+) + H2O = glycine betaine + NADH + 2 H(+). It functions in the pathway amine and polyamine biosynthesis; betaine biosynthesis via choline pathway; betaine from betaine aldehyde: step 1/1. Functionally, involved in the biosynthesis of the osmoprotectant glycine betaine. Catalyzes the irreversible oxidation of betaine aldehyde to the corresponding acid. This Escherichia coli O139:H28 (strain E24377A / ETEC) protein is Betaine aldehyde dehydrogenase.